The sequence spans 120 residues: NAD(P)H-quinone oxidoreductase subunit 3, chloroplastic (120 aa).

3 consecutive transmembrane segments (helical) span residues 9–29 (IFWA…IISG), 64–84 (MFAL…PWAM), and 88–108 (VLGV…IVGS).

The protein belongs to the complex I subunit 3 family. NDH is composed of at least 16 different subunits, 5 of which are encoded in the nucleus.

The protein localises to the plastid. Its subcellular location is the chloroplast thylakoid membrane. The catalysed reaction is a plastoquinone + NADH + (n+1) H(+)(in) = a plastoquinol + NAD(+) + n H(+)(out). The enzyme catalyses a plastoquinone + NADPH + (n+1) H(+)(in) = a plastoquinol + NADP(+) + n H(+)(out). Its function is as follows. NDH shuttles electrons from NAD(P)H:plastoquinone, via FMN and iron-sulfur (Fe-S) centers, to quinones in the photosynthetic chain and possibly in a chloroplast respiratory chain. The immediate electron acceptor for the enzyme in this species is believed to be plastoquinone. Couples the redox reaction to proton translocation, and thus conserves the redox energy in a proton gradient. This chain is NAD(P)H-quinone oxidoreductase subunit 3, chloroplastic, found in Lemna minor (Common duckweed).